Here is a 503-residue protein sequence, read N- to C-terminus: Cytochrome P450 3A7 (503 aa).

Cys442 contributes to the heme binding site.

It belongs to the cytochrome P450 family. It depends on heme as a cofactor. In terms of tissue distribution, expressed in fetal liver (at protein level).

The protein resides in the endoplasmic reticulum membrane. The protein localises to the microsome membrane. It catalyses the reaction an organic molecule + reduced [NADPH--hemoprotein reductase] + O2 = an alcohol + oxidized [NADPH--hemoprotein reductase] + H2O + H(+). The catalysed reaction is 3beta-hydroxyandrost-5-en-17-one + reduced [NADPH--hemoprotein reductase] + O2 = 3beta,16alpha-dihydroxy-androst-5-en-17-one + oxidized [NADPH--hemoprotein reductase] + H2O + H(+). The enzyme catalyses dehydroepiandrosterone 3-sulfate + reduced [NADPH--hemoprotein reductase] + O2 = 16alpha-hydroxydehydroepiandrosterone 3-sulfate + oxidized [NADPH--hemoprotein reductase] + H2O + H(+). It carries out the reaction testosterone + reduced [NADPH--hemoprotein reductase] + O2 = 6beta,17beta-dihydroxyandrost-4-en-3-one + oxidized [NADPH--hemoprotein reductase] + H2O + H(+). It catalyses the reaction estrone + reduced [NADPH--hemoprotein reductase] + O2 = 2-hydroxyestrone + oxidized [NADPH--hemoprotein reductase] + H2O + H(+). The catalysed reaction is estrone + reduced [NADPH--hemoprotein reductase] + O2 = 4-hydroxyestrone + oxidized [NADPH--hemoprotein reductase] + H2O + H(+). The enzyme catalyses estrone + reduced [NADPH--hemoprotein reductase] + O2 = 16alpha-hydroxyestrone + oxidized [NADPH--hemoprotein reductase] + H2O + H(+). It carries out the reaction 17beta-estradiol + reduced [NADPH--hemoprotein reductase] + O2 = 2-hydroxy-17beta-estradiol + oxidized [NADPH--hemoprotein reductase] + H2O + H(+). It catalyses the reaction 17beta-estradiol + reduced [NADPH--hemoprotein reductase] + O2 = 6beta-hydroxyestradiol-17beta + oxidized [NADPH--hemoprotein reductase] + H2O + H(+). The catalysed reaction is all-trans-retinoate + reduced [NADPH--hemoprotein reductase] + O2 = all-trans-4-hydroxyretinoate + oxidized [NADPH--hemoprotein reductase] + H2O + H(+). The enzyme catalyses all-trans-retinoate + reduced [NADPH--hemoprotein reductase] + O2 = all-trans-18-hydroxyretinoate + oxidized [NADPH--hemoprotein reductase] + H2O + H(+). The protein operates within steroid hormone biosynthesis. It participates in cofactor metabolism; retinol metabolism. In terms of biological role, a cytochrome P450 monooxygenase involved in the metabolism of steroid hormones and vitamins during embryogenesis. Mechanistically, uses molecular oxygen inserting one oxygen atom into a substrate, and reducing the second into a water molecule, with two electrons provided by NADPH via cytochrome P450 reductase (NADPH--hemoprotein reductase). Catalyzes the hydroxylation of carbon-hydrogen bonds. Metabolizes 3beta-hydroxyandrost-5-en-17-one (dehydroepiandrosterone, DHEA), a precursor in the biosynthesis of androgen and estrogen steroid hormones. Exhibits high catalytic activity for the formation of hydroxyestrogens from estrone (E1), particularly D-ring hydroxylated estrone at the C16-alpha position. Mainly hydroxylates all trans-retinoic acid (atRA) to 4-hydroxyretinoate and may play a role in atRA clearance during fetal development. Also involved in the oxidative metabolism of xenobiotics including anticonvulsants. This Homo sapiens (Human) protein is Cytochrome P450 3A7.